The chain runs to 1452 residues: ABC multidrug transporter A-1 (1452 aa).

Residues 1–20 (MNESHEAGKNSSTNVEEREE) are disordered. N-linked (GlcNAc...) asparagine glycosylation is found at Asn2, Asn10, Asn228, Asn287, and Asn311. Residues 110–363 (LKTLSLARIA…FLQMGFVCPD (254 aa)) form the ABC transporter 1 domain. The next 6 membrane-spanning stretches (helical) occupy residues 474-494 (VTISSLFGNTIISLVIASIFY), 508-528 (ALLFFAVLMNALGCGLEMLTL), 554-574 (MIMDLPYKILNAITSNIVLYF), 583-603 (GAFFFFVFTSFILTLTMSMFF), 616-636 (VLPFSAVLLLGLSMYTGFAIP), and 725-745 (IGVIFAYMFLLGAVYLVATDF). One can recognise an ABC transporter 2 domain in the interval 802–1044 (FQWKDVCFDI…ILIDYFVRNG (243 aa)). 838 to 845 (GVSGAGKT) serves as a coordination point for ATP. Helical transmembrane passes span 1153–1173 (ALCVLSALFVGFSLFHTPNTI), 1183–1203 (IFMLLTLFGQLIQQIMPHFVA), 1223–1243 (FLIANIVVELPWNSLMSVLMF), 1271–1291 (LMIWTFLLFSSTFAHFMIAAF), 1297–1317 (AGNLGNLLFLLCLLFCGVLAT), and 1324–1344 (FWIFMYRVSPFTYLVSGMLSV). Residues Asn1350, Asn1365, and Asn1391 are each glycosylated (N-linked (GlcNAc...) asparagine). A helical membrane pass occupies residues 1418 to 1438 (FGLMWVFIVFNIFAACSLYWW).

It belongs to the ABC transporter superfamily. ABCG family. PDR (TC 3.A.1.205) subfamily.

Its subcellular location is the membrane. ABC transporter that seems not to be involved in the efflux of toxic substances, at least not the classical compounds such as itraconazole, amphotericin B, voriconazole, posaconazole, ravuconazole, or echinocandins. The chain is ABC multidrug transporter A-1 from Aspergillus fumigatus (strain ATCC MYA-4609 / CBS 101355 / FGSC A1100 / Af293) (Neosartorya fumigata).